We begin with the raw amino-acid sequence, 77 residues long: MAPSALLRPVSRLLAPARLPSGRASARSKFYVREPLNAKPDWLKVGFTLGTTVFLWVYLIKQHNEDILECKRRNGLE.

The N-terminal 28 residues, 1-28 (MAPSALLRPVSRLLAPARLPSGRASARS), are a transit peptide targeting the mitochondrion. A helical membrane pass occupies residues 42 to 60 (WLKVGFTLGTTVFLWVYLI).

It belongs to the complex I NDUFC1 subunit family. As to quaternary structure, complex I is composed of 45 different subunits.

Its subcellular location is the mitochondrion inner membrane. Its function is as follows. Accessory subunit of the mitochondrial membrane respiratory chain NADH dehydrogenase (Complex I), that is believed not to be involved in catalysis. Complex I functions in the transfer of electrons from NADH to the respiratory chain. The immediate electron acceptor for the enzyme is believed to be ubiquinone. The polypeptide is NADH dehydrogenase [ubiquinone] 1 subunit C1, mitochondrial (NDUFC1) (Pongo abelii (Sumatran orangutan)).